The following is a 94-amino-acid chain: Pyrimidine/purine nucleoside phosphorylase (94 aa).

It belongs to the nucleoside phosphorylase PpnP family.

The enzyme catalyses a purine D-ribonucleoside + phosphate = a purine nucleobase + alpha-D-ribose 1-phosphate. The catalysed reaction is adenosine + phosphate = alpha-D-ribose 1-phosphate + adenine. It carries out the reaction cytidine + phosphate = cytosine + alpha-D-ribose 1-phosphate. It catalyses the reaction guanosine + phosphate = alpha-D-ribose 1-phosphate + guanine. The enzyme catalyses inosine + phosphate = alpha-D-ribose 1-phosphate + hypoxanthine. The catalysed reaction is thymidine + phosphate = 2-deoxy-alpha-D-ribose 1-phosphate + thymine. It carries out the reaction uridine + phosphate = alpha-D-ribose 1-phosphate + uracil. It catalyses the reaction xanthosine + phosphate = alpha-D-ribose 1-phosphate + xanthine. Catalyzes the phosphorolysis of diverse nucleosides, yielding D-ribose 1-phosphate and the respective free bases. Can use uridine, adenosine, guanosine, cytidine, thymidine, inosine and xanthosine as substrates. Also catalyzes the reverse reactions. The sequence is that of Pyrimidine/purine nucleoside phosphorylase from Pseudomonas putida (strain W619).